A 514-amino-acid chain; its full sequence is GMP synthase [glutamine-hydrolyzing] (514 aa).

One can recognise a Glutamine amidotransferase type-1 domain in the interval 9 to 199; sequence KIIVLDFGSQ…ALNVCGCKGD (191 aa). Residue C86 is the Nucleophile of the active site. Residues H173 and E175 contribute to the active site. Residues 200-389 enclose the GMPS ATP-PPase domain; that stretch reads WTMENFSEVE…LGMPDAIVWR (190 aa). An ATP-binding site is contributed by 227 to 233; that stretch reads SGGVDSS.

In terms of assembly, homodimer.

The enzyme catalyses XMP + L-glutamine + ATP + H2O = GMP + L-glutamate + AMP + diphosphate + 2 H(+). It participates in purine metabolism; GMP biosynthesis; GMP from XMP (L-Gln route): step 1/1. Catalyzes the synthesis of GMP from XMP. This is GMP synthase [glutamine-hydrolyzing] from Listeria monocytogenes serotype 4b (strain F2365).